The following is a 351-amino-acid chain: Alcohol dehydrogenase 5 (351 aa).

Positions 47, 70, 101, 104, 107, 115, and 183 each coordinate Zn(2+). Residues 181–187, aspartate 205, lysine 210, 272–274, and arginine 344 contribute to the NAD(+) site; these read GACGGLG and VGM.

It belongs to the zinc-containing alcohol dehydrogenase family. The cofactor is Zn(2+).

The catalysed reaction is a primary alcohol + NAD(+) = an aldehyde + NADH + H(+). It carries out the reaction a secondary alcohol + NAD(+) = a ketone + NADH + H(+). This Saccharomyces pastorianus (Lager yeast) protein is Alcohol dehydrogenase 5 (ADH5).